The sequence spans 163 residues: MISMVFKRKEAGITDYSKRLKLLKSREKRFIVRITGKGVIAQVAEYSDIGDRILFTVTDKTLAKYGVDLRGNNIQVCYLVGYIAGIESEKNGVESAVLDTGRRKFRKGGRIAACLKGFTDAGIEVPHGEDVFPDKKRIDGKHLKSPVKISEIVKNFKKMEEKA.

This sequence belongs to the universal ribosomal protein uL18 family. As to quaternary structure, part of the 50S ribosomal subunit. Contacts the 5S and 23S rRNAs.

Its function is as follows. This is one of the proteins that bind and probably mediate the attachment of the 5S RNA into the large ribosomal subunit, where it forms part of the central protuberance. This is Large ribosomal subunit protein uL18 from Thermoplasma acidophilum (strain ATCC 25905 / DSM 1728 / JCM 9062 / NBRC 15155 / AMRC-C165).